Consider the following 1551-residue polypeptide: Dual oxidase 1 (1551 aa).

Residues 1 to 21 form the signal peptide; sequence MGFCLALAWTLLVGAWTPLGA. The Extracellular portion of the chain corresponds to 22-596; sequence QNPISWEVQR…YFEGSGFGFG (575 aa). The peroxidase-like; mediates peroxidase activity stretch occupies residues 26-593; the sequence is SWEVQRFDGW…VRDYFEGSGF (568 aa). A glycan (N-linked (GlcNAc...) asparagine) is linked at Asn94. The segment at 150–172 is disordered; sequence RWDPETGRSPSNPRDPANQVTGW. N-linked (GlcNAc...) asparagine glycans are attached at residues Asn342, Asn354, Asn461, and Asn534. A helical membrane pass occupies residues 597-617; the sequence is VTIGTLCCFPLVSLLSAWIVA. The Cytoplasmic portion of the chain corresponds to 618 to 1044; the sequence is RLRMRNFKRL…KRFIENYRRH (427 aa). 3 EF-hand domains span residues 815–850, 851–886, and 895–930; these read PQDM…FMKG, SPEE…FIEI, and QLAE…HNSE. Asp828, Asp830, Asn832, Tyr834, Glu839, Asp864, Asp866, Asn868, and Glu875 together coordinate Ca(2+). Residues 956–1248 are interaction with TXNDC11; it reads YISQDMICPS…GSFALIQLPR (293 aa). A helical transmembrane segment spans residues 1045–1065; sequence IGCVAVFYAIAGGLFLERAYY. Residues 1066–1080 lie on the Extracellular side of the membrane; it reads YAFAAHHTGITDTTR. A helical transmembrane segment spans residues 1081–1101; sequence VGIILSRGTAASISFMFSYIL. Residues 1087–1269 enclose the Ferric oxidoreductase domain; the sequence is RGTAASISFM…YGGDKLVSLS (183 aa). Topologically, residues 1102-1148 are cytoplasmic; it reads LTMCRNLITFLRETFLNRYVPFDAAVDFHRLIASTAIVLTVLHSVGH. Residues 1149 to 1171 traverse the membrane as a helical segment; it reads VVNVYLFSISPLSVLSCLFPGLF. The Extracellular segment spans residues 1172-1188; that stretch reads HDDGSELPQKYYWWFFQ. A helical membrane pass occupies residues 1189 to 1209; it reads TVPGLTGVVLLLILAIMYVFA. The Cytoplasmic portion of the chain corresponds to 1210-1226; sequence SHHFRRRSFRGFWLTHH. Residues 1227–1247 traverse the membrane as a helical segment; it reads LYILLYVLLIIHGSFALIQLP. Arg1248 is a topological domain (extracellular). The chain crosses the membrane as a helical span at residues 1249 to 1269; sequence FHIFFLVPAIIYGGDKLVSLS. The region spanning 1270–1376 is the FAD-binding FR-type domain; it reads RKKVEISVVK…DGPFGEGHQE (107 aa). The Cytoplasmic segment spans residues 1270 to 1551; sequence RKKVEISVVK…THFSHHYENF (282 aa).

This sequence in the N-terminal section; belongs to the peroxidase family. In terms of assembly, interacts with TXNDC11, TPO and CYBA. N-glycosylated. Expressed in thyrocytes and tracheal surface epithelial cells (at protein level). Expressed in thyroid, trachea, bronchium, and to a lower extent, in placenta, testis, prostate, pancreas and heart.

Its subcellular location is the apical cell membrane. The catalysed reaction is NADH + O2 + H(+) = H2O2 + NAD(+). The enzyme catalyses NADPH + O2 + H(+) = H2O2 + NADP(+). Its pathway is hormone biosynthesis; thyroid hormone biosynthesis. With respect to regulation, the NADPH oxidase activity is calcium-dependent. Peroxidase activity is inhibited by aminobenzohydrazide. Its function is as follows. Generates hydrogen peroxide which is required for the activity of thyroid peroxidase/TPO and lactoperoxidase/LPO. Plays a role in thyroid hormones synthesis and lactoperoxidase-mediated antimicrobial defense at the surface of mucosa. May have its own peroxidase activity through its N-terminal peroxidase-like domain. This Homo sapiens (Human) protein is Dual oxidase 1 (DUOX1).